The chain runs to 199 residues: CASP-like protein 4C1 (199 aa).

Residues 1-35 are Cytoplasmic-facing; it reads MESGSVANDSGPLNSTPDVHLYGKTAAMKQRRSNT. A helical membrane pass occupies residues 36 to 56; sequence MLFVFRLLTFSFSLAAVLVMG. Over 57–80 the chain is Extracellular; it reads TNKQKIRSAPQYLEVAWHDFDPFR. Residues 81–101 form a helical membrane-spanning segment; the sequence is YVFAVNAIICVYSFVETWLAV. Residues 102–124 are Cytoplasmic-facing; sequence YTLSRGTLLLPETFQVWFDYGHD. Residues 125–145 form a helical membrane-spanning segment; the sequence is QGFACLLFSANSVGIAMAQLL. The Extracellular portion of the chain corresponds to 146 to 169; it reads QSGSTLIQGQYYCSDAGAYCTQAR. The helical transmembrane segment at 170–190 threads the bilayer; it reads VSIAMGFGAFLFLALSSFLTG. Residues 191–199 are Cytoplasmic-facing; that stretch reads LRVARWYLP.

Belongs to the Casparian strip membrane proteins (CASP) family. As to quaternary structure, homodimer and heterodimers.

It is found in the cell membrane. This is CASP-like protein 4C1 from Physcomitrium patens (Spreading-leaved earth moss).